The following is a 501-amino-acid chain: Endoglucanase 1 (501 aa).

A signal peptide spans 1 to 29; the sequence is MALYLSSSRLITFLSFILLLSNGFSSSSS. The Nucleophile role is filled by Asp96. Catalysis depends on residues His422, Asp473, and Glu482.

It belongs to the glycosyl hydrolase 9 (cellulase E) family.

The protein resides in the secreted. It carries out the reaction Endohydrolysis of (1-&gt;4)-beta-D-glucosidic linkages in cellulose, lichenin and cereal beta-D-glucans.. This is Endoglucanase 1 (CEL2) from Arabidopsis thaliana (Mouse-ear cress).